Reading from the N-terminus, the 449-residue chain is MAAQAAPELAKLDLNKNTGSVEANAVSAGGSEKEEAENEGDSEDDRDDEQAGGSAEVNAEKKKKKKRPKKKKKTAKVQSSPPRIPLTTLFPNNNFPEGEIVEYLNENSYRTTNEEKRHLDRMNNDFLTEYRQAAEIHRQVRQYAQKELIKPGATLTDIAEGIEDGVRHLTGHMGLEEGDSLVAGMGFPTGLNINHCAAHYSPNAGNKVVLQHGDVMKVDFGVHINGRIVDSAFTVAFDPVFDPLLTAVKEATNTGIKEAGIDVRMSDIGAAIQETMESYELELNGTSYPIKAIRNLNGHTIGQYEIHGGVNGKSVPIVKGGDQTKMEEGETYAIETFGSTGKGYVRDDMETSHYAKVPNAPSVPLRLSSAKNLYSLINKNFGTLPFCRRYLDRLGQEKYLLGLNNLVSSGLVDAYPPLCDVKGSYTAQFEHTILLRPNVKEVISRGDDY.

Positions 1–91 are disordered; the sequence is MAAQAAPELA…PRIPLTTLFP (91 aa). The segment covering 34–50 has biased composition (acidic residues); sequence EEAENEGDSEDDRDDEQ. Positions 61-75 are enriched in basic residues; sequence KKKKKKRPKKKKKTA. His-199 is a binding site for substrate. Asp-219, Asp-230, and His-299 together coordinate a divalent metal cation. Substrate is bound at residue His-307. Residues Glu-335 and Glu-430 each contribute to the a divalent metal cation site.

This sequence belongs to the peptidase M24A family. Methionine aminopeptidase eukaryotic type 2 subfamily. It depends on Co(2+) as a cofactor. Zn(2+) serves as cofactor. Requires Mn(2+) as cofactor. Fe(2+) is required as a cofactor.

The protein resides in the cytoplasm. The enzyme catalyses Release of N-terminal amino acids, preferentially methionine, from peptides and arylamides.. In terms of biological role, cotranslationally removes the N-terminal methionine from nascent proteins. The N-terminal methionine is often cleaved when the second residue in the primary sequence is small and uncharged (Met-Ala-, Cys, Gly, Pro, Ser, Thr, or Val). The chain is Methionine aminopeptidase 2 from Trichophyton verrucosum (strain HKI 0517).